The sequence spans 106 residues: Ribulose bisphosphate carboxylase small subunit (106 aa).

Belongs to the RuBisCO small chain family. As to quaternary structure, heterohexadecamer of 8 large and 8 small subunits.

It localises to the plastid. It is found in the cyanelle. Its function is as follows. RuBisCO catalyzes two reactions: the carboxylation of D-ribulose 1,5-bisphosphate, the primary event in carbon dioxide fixation, as well as the oxidative fragmentation of the pentose substrate. Both reactions occur simultaneously and in competition at the same active site. Although the small subunit is not catalytic it is essential for maximal activity. The polypeptide is Ribulose bisphosphate carboxylase small subunit (Cyanophora paradoxa).